Here is a 191-residue protein sequence, read N- to C-terminus: Orotate phosphoribosyltransferase (191 aa).

5-phospho-alpha-D-ribose 1-diphosphate is bound at residue 114 to 122; that stretch reads EDVITTGGS. Orotate is bound by residues Thr118 and Arg146.

Belongs to the purine/pyrimidine phosphoribosyltransferase family. PyrE subfamily. Homodimer. Requires Mg(2+) as cofactor.

The catalysed reaction is orotidine 5'-phosphate + diphosphate = orotate + 5-phospho-alpha-D-ribose 1-diphosphate. Its pathway is pyrimidine metabolism; UMP biosynthesis via de novo pathway; UMP from orotate: step 1/2. Functionally, catalyzes the transfer of a ribosyl phosphate group from 5-phosphoribose 1-diphosphate to orotate, leading to the formation of orotidine monophosphate (OMP). The polypeptide is Orotate phosphoribosyltransferase (Caldicellulosiruptor saccharolyticus (strain ATCC 43494 / DSM 8903 / Tp8T 6331)).